Reading from the N-terminus, the 62-residue chain is MKASDLKNMSVEELTAKNVELTKELFNLRFQLHTGRLENTAKISAVKKDIARVNTFLSERRG.

The protein belongs to the universal ribosomal protein uL29 family.

In Geobacter metallireducens (strain ATCC 53774 / DSM 7210 / GS-15), this protein is Large ribosomal subunit protein uL29.